Here is a 314-residue protein sequence, read N- to C-terminus: 4-hydroxy-3-methylbut-2-enyl diphosphate reductase (314 aa).

C18 serves as a coordination point for [4Fe-4S] cluster. Residues H47 and H80 each coordinate (2E)-4-hydroxy-3-methylbut-2-enyl diphosphate. Positions 47 and 80 each coordinate dimethylallyl diphosphate. 2 residues coordinate isopentenyl diphosphate: H47 and H80. [4Fe-4S] cluster is bound at residue C102. A (2E)-4-hydroxy-3-methylbut-2-enyl diphosphate-binding site is contributed by H130. H130 serves as a coordination point for dimethylallyl diphosphate. H130 lines the isopentenyl diphosphate pocket. Catalysis depends on E132, which acts as the Proton donor. T171 provides a ligand contact to (2E)-4-hydroxy-3-methylbut-2-enyl diphosphate. Residue C201 participates in [4Fe-4S] cluster binding. (2E)-4-hydroxy-3-methylbut-2-enyl diphosphate-binding residues include S229, S230, N231, and S273. Dimethylallyl diphosphate is bound by residues S229, S230, N231, and S273. Isopentenyl diphosphate-binding residues include S229, S230, N231, and S273.

The protein belongs to the IspH family. Requires [4Fe-4S] cluster as cofactor.

It catalyses the reaction isopentenyl diphosphate + 2 oxidized [2Fe-2S]-[ferredoxin] + H2O = (2E)-4-hydroxy-3-methylbut-2-enyl diphosphate + 2 reduced [2Fe-2S]-[ferredoxin] + 2 H(+). The catalysed reaction is dimethylallyl diphosphate + 2 oxidized [2Fe-2S]-[ferredoxin] + H2O = (2E)-4-hydroxy-3-methylbut-2-enyl diphosphate + 2 reduced [2Fe-2S]-[ferredoxin] + 2 H(+). The protein operates within isoprenoid biosynthesis; dimethylallyl diphosphate biosynthesis; dimethylallyl diphosphate from (2E)-4-hydroxy-3-methylbutenyl diphosphate: step 1/1. It functions in the pathway isoprenoid biosynthesis; isopentenyl diphosphate biosynthesis via DXP pathway; isopentenyl diphosphate from 1-deoxy-D-xylulose 5-phosphate: step 6/6. Catalyzes the conversion of 1-hydroxy-2-methyl-2-(E)-butenyl 4-diphosphate (HMBPP) into a mixture of isopentenyl diphosphate (IPP) and dimethylallyl diphosphate (DMAPP). Acts in the terminal step of the DOXP/MEP pathway for isoprenoid precursor biosynthesis. This is 4-hydroxy-3-methylbut-2-enyl diphosphate reductase from Phenylobacterium zucineum (strain HLK1).